Here is a 373-residue protein sequence, read N- to C-terminus: Nodulation protein NolL (373 aa).

9 helical membrane passes run 27-47 (DFAK…QYLI), 62-82 (SIYM…SSGA), 98-118 (QLLL…SAVI), 140-160 (WFIW…TFNR), 164-184 (WIIS…SITP), 212-232 (RYKW…FLGW), 253-273 (QVFL…QSMF), 286-306 (RFVA…QGAV), and 324-344 (RITF…AIRS).

The protein belongs to the acyltransferase 3 family.

Its subcellular location is the cell membrane. Its function is as follows. Thought to be an acetyltransferase that modifies the fucose of the nod factor. This Mesorhizobium japonicum (strain LMG 29417 / CECT 9101 / MAFF 303099) (Mesorhizobium loti (strain MAFF 303099)) protein is Nodulation protein NolL (nolL).